A 498-amino-acid chain; its full sequence is ATP synthase subunit beta, chloroplastic (498 aa).

Residue 172 to 179 coordinates ATP; it reads GGAGVGKT.

This sequence belongs to the ATPase alpha/beta chains family. In terms of assembly, F-type ATPases have 2 components, CF(1) - the catalytic core - and CF(0) - the membrane proton channel. CF(1) has five subunits: alpha(3), beta(3), gamma(1), delta(1), epsilon(1). CF(0) has four main subunits: a(1), b(1), b'(1) and c(9-12).

The protein resides in the plastid. It is found in the chloroplast thylakoid membrane. The catalysed reaction is ATP + H2O + 4 H(+)(in) = ADP + phosphate + 5 H(+)(out). Produces ATP from ADP in the presence of a proton gradient across the membrane. The catalytic sites are hosted primarily by the beta subunits. This chain is ATP synthase subunit beta, chloroplastic, found in Magnolia tripetala (Umbrella-tree).